The primary structure comprises 266 residues: Dioicin-2 (266 aa).

2 cysteine pairs are disulfide-bonded: Cys32–Cys263 and Cys85–Cys102. The active site involves Glu176.

The protein resides in the secreted. It localises to the extracellular space. The protein localises to the golgi apparatus. It is found in the vacuole. The catalysed reaction is Endohydrolysis of the N-glycosidic bond at one specific adenosine on the 28S rRNA.. Nicks pBR322 dsDNA. Has adenine polynucleotide glycosidase activity on herring sperm ssDNA. In Phytolacca dioica (Bella sombra tree), this protein is Dioicin-2.